The sequence spans 239 residues: Large ribosomal subunit protein uL2 (239 aa).

Disordered stretches follow at residues 1-28 (MGKR…VGPA) and 199-239 (SHPH…RRKG). The span at 225-239 (KVGHIAARRTGRRKG) shows a compositional bias: basic residues.

This sequence belongs to the universal ribosomal protein uL2 family. In terms of assembly, part of the 50S ribosomal subunit. Forms a bridge to the 30S subunit in the 70S ribosome.

In terms of biological role, one of the primary rRNA binding proteins. Required for association of the 30S and 50S subunits to form the 70S ribosome, for tRNA binding and peptide bond formation. It has been suggested to have peptidyltransferase activity; this is somewhat controversial. Makes several contacts with the 16S rRNA in the 70S ribosome. The chain is Large ribosomal subunit protein uL2 from Staphylothermus marinus (strain ATCC 43588 / DSM 3639 / JCM 9404 / F1).